The sequence spans 228 residues: Octanoyltransferase (228 aa).

The BPL/LPL catalytic domain maps to 30–214 (KKIGDTLLLL…YFGKVFGKSL (185 aa)). Residues 75–82 (RGGDVTYH), 144–146 (AIG), and 157–159 (GFA) contribute to the substrate site. The Acyl-thioester intermediate role is filled by Cys175.

It belongs to the LipB family.

It is found in the cytoplasm. The catalysed reaction is octanoyl-[ACP] + L-lysyl-[protein] = N(6)-octanoyl-L-lysyl-[protein] + holo-[ACP] + H(+). Its pathway is protein modification; protein lipoylation via endogenous pathway; protein N(6)-(lipoyl)lysine from octanoyl-[acyl-carrier-protein]: step 1/2. Functionally, catalyzes the transfer of endogenously produced octanoic acid from octanoyl-acyl-carrier-protein onto the lipoyl domains of lipoate-dependent enzymes. Lipoyl-ACP can also act as a substrate although octanoyl-ACP is likely to be the physiological substrate. The polypeptide is Octanoyltransferase (Caldicellulosiruptor bescii (strain ATCC BAA-1888 / DSM 6725 / KCTC 15123 / Z-1320) (Anaerocellum thermophilum)).